Consider the following 312-residue polypeptide: Beta-ketoacyl-[acyl-carrier-protein] synthase III (312 aa).

Catalysis depends on residues C112 and H237. Positions 238–242 are ACP-binding; that stretch reads QANIR. N267 is a catalytic residue.

It belongs to the thiolase-like superfamily. FabH family. In terms of assembly, homodimer.

It is found in the cytoplasm. It carries out the reaction (2S)-2-methylbutanoyl-CoA + malonyl-[ACP] + H(+) = (4S)-4-methyl-3-oxohexanoyl-[ACP] + CO2 + CoA. The enzyme catalyses 2-methylpropanoyl-CoA + malonyl-[ACP] + H(+) = 4-methyl-3-oxopentanoyl-[ACP] + CO2 + CoA. The catalysed reaction is 3-methylbutanoyl-CoA + malonyl-[ACP] + H(+) = 5-methyl-3-oxohexanoyl-[ACP] + CO2 + CoA. It catalyses the reaction malonyl-[ACP] + acetyl-CoA + H(+) = 3-oxobutanoyl-[ACP] + CO2 + CoA. Its pathway is lipid metabolism; fatty acid biosynthesis. Catalyzes the condensation reaction of fatty acid synthesis by the addition to an acyl acceptor of two carbons from malonyl-ACP. Catalyzes the first condensation reaction which initiates fatty acid synthesis and may therefore play a role in governing the total rate of fatty acid production. Possesses both acetoacetyl-ACP synthase and acetyl transacylase activities. Can use branched-chain acyl-CoAs, with a preference for 2-methylbutanoyl-CoA, the precursor of odd-numbered anteiso fatty acids, at 30 degrees Celsius, which is further increased at a low temperature. Shows weak activity with acetyl-CoA. The protein is Beta-ketoacyl-[acyl-carrier-protein] synthase III of Listeria monocytogenes serotype 1/2a (strain 10403S).